Reading from the N-terminus, the 141-residue chain is Large ribosomal subunit protein uL11 (141 aa).

It belongs to the universal ribosomal protein uL11 family. In terms of assembly, part of the ribosomal stalk of the 50S ribosomal subunit. Interacts with L10 and the large rRNA to form the base of the stalk. L10 forms an elongated spine to which L12 dimers bind in a sequential fashion forming a multimeric L10(L12)X complex. Post-translationally, one or more lysine residues are methylated.

Its function is as follows. Forms part of the ribosomal stalk which helps the ribosome interact with GTP-bound translation factors. In Chlamydia muridarum (strain MoPn / Nigg), this protein is Large ribosomal subunit protein uL11.